The primary structure comprises 150 residues: Large ribosomal subunit protein uL15 (150 aa).

A disordered region spans residues 1-60 (MKLSDLRPNPGANKRRKRVGRGPGSGHGKTATRGHKGQKSRSGGLKDPRRFEGGRSTTLM). Basic residues predominate over residues 30 to 39 (TATRGHKGQK). Positions 44–53 (GLKDPRRFEG) are enriched in basic and acidic residues.

Belongs to the universal ribosomal protein uL15 family. In terms of assembly, part of the 50S ribosomal subunit.

Binds to the 23S rRNA. This is Large ribosomal subunit protein uL15 from Thermus thermophilus (strain ATCC BAA-163 / DSM 7039 / HB27).